Reading from the N-terminus, the 389-residue chain is Probable L-tyrosine/L-aspartate decarboxylase (389 aa).

At lysine 233 the chain carries N6-(pyridoxal phosphate)lysine.

This sequence belongs to the group II decarboxylase family. MfnA subfamily. Pyridoxal 5'-phosphate is required as a cofactor.

The catalysed reaction is L-tyrosine + H(+) = tyramine + CO2. It catalyses the reaction L-aspartate + H(+) = beta-alanine + CO2. The protein operates within cofactor biosynthesis; methanofuran biosynthesis. It participates in cofactor biosynthesis; coenzyme A biosynthesis. Its function is as follows. Catalyzes the decarboxylation of L-tyrosine to produce tyramine for methanofuran biosynthesis. Can also catalyze the decarboxylation of L-aspartate to produce beta-alanine for coenzyme A (CoA) biosynthesis. The polypeptide is Probable L-tyrosine/L-aspartate decarboxylase (Methanosphaera stadtmanae (strain ATCC 43021 / DSM 3091 / JCM 11832 / MCB-3)).